Here is a 58-residue protein sequence, read N- to C-terminus: Large ribosomal subunit protein uL30 (58 aa).

Belongs to the universal ribosomal protein uL30 family. As to quaternary structure, part of the 50S ribosomal subunit.

This Acinetobacter baumannii (strain AB307-0294) protein is Large ribosomal subunit protein uL30.